The following is a 130-amino-acid chain: MAPQSKRSGGRKQKKHVPNGVAHIQSTFNNTIVTISDASGDVVSWASAGSSGFKGAKKGTPFAAQTASESAARRAMDQGMRQIEVMVSGPGAGRETAIRALQGAGLEITLIRDVTPIPHNGCRPPKRRRV.

The disordered stretch occupies residues 1-21; the sequence is MAPQSKRSGGRKQKKHVPNGV. Residues 8-17 are compositionally biased toward basic residues; sequence SGGRKQKKHV.

This sequence belongs to the universal ribosomal protein uS11 family. In terms of assembly, part of the 30S ribosomal subunit. Interacts with proteins S7 and S18. Binds to IF-3.

In terms of biological role, located on the platform of the 30S subunit, it bridges several disparate RNA helices of the 16S rRNA. Forms part of the Shine-Dalgarno cleft in the 70S ribosome. The chain is Small ribosomal subunit protein uS11 from Acaryochloris marina (strain MBIC 11017).